The sequence spans 184 residues: Cobalamin adenosyltransferase (184 aa).

The segment at 1 to 21 (MGNRLSKIATRTGDAGTTGLG) is disordered. ATP contacts are provided by residues 10 to 13 (TRTG), 18 to 19 (TG), Lys-28, 130 to 134 (RRAER), and Asn-154.

This sequence belongs to the Cob(I)alamin adenosyltransferase family. In terms of assembly, homotrimer.

The catalysed reaction is 2 cob(II)alamin + AH2 + 2 ATP = 2 adenosylcob(III)alamin + 2 triphosphate + A + 2 H(+). Its activity is regulated as follows. Is potentially allosterically regulated by GTP/GDP, which enhances its affinity for AdoCbl by 5-fold. Binds cob(II)alamin weakly in the absence of ATP. The presence of ATP (but not GTP or GDP) increases the affinity of cob(II)alamin for the enzyme, and stoichiometric binding is observed. GTP blocks the transfer of cob(II)alamin to IcmF from ATR, thus averting its reconstitution with inactive cofactor. In terms of biological role, adenosyltransferase that catalyzes the conversion of cob(II)alamin to adenosylcob(III)alamin (AdoCbl) in the presence of ATP and an electron donor. Acts as an accessory protein of IcmF that functions in cofactor repair, since IcmF is prone to inactivation during catalytic turnover due to the occasional loss of the 5'-deoxyadenosine moiety and formation of the inactive cob(II)alamin cofactor in its active site. Thus, receives and repairs the inactive cofactor, which is then reloaded onto IcmF in a GTPase-gated step. This chain is Cobalamin adenosyltransferase, found in Cupriavidus metallidurans (strain ATCC 43123 / DSM 2839 / NBRC 102507 / CH34) (Ralstonia metallidurans).